A 313-amino-acid chain; its full sequence is Homeobox protein CDX-2 (313 aa).

Ser60 is subject to Phosphoserine. The disordered stretch occupies residues 113–153 (HAHHHPHHHPHHPAAAPSCASGLLQTLNPGPPGPAATGAAE). The span at 114-124 (AHHHPHHHPHH) shows a compositional bias: basic residues. The segment at 185–215 (KDKYRVVYTDHQRLELEKEFHYSRYITIRRK) is interaction with DNA. The segment at residues 185-244 (KDKYRVVYTDHQRLELEKEFHYSRYITIRRKAELAATLGLSERQVKIWFQNRRAKERKIN) is a DNA-binding region (homeobox). Residues 227–241 (RQVKIWFQNRRAKER) form an interaction with 5-mCpG DNA region. Residues 242-313 (KINKKKLQQQ…GGVLNPTVTQ (72 aa)) are disordered. 2 stretches are compositionally biased toward low complexity: residues 249–261 (QQQQ…QQLA) and 271–300 (QPGS…PGVL). Ser283 carries the post-translational modification Phosphoserine. A 4S motif; modulates transactivation activity and protein stability motif is present at residues 283 to 295 (SPVSSLQGSVPGS).

This sequence belongs to the Caudal homeobox family. As to quaternary structure, can bind DNA as a monomer or homodimer. In terms of processing, ubiquitinated, leading to its degradation by the proteasome. Phosphorylation at Ser-60 reduces transactivation capacity. Phosphorylation at Ser-283 reduces transactivation capacity and also increases ubiquitin-dependent proteasome degradation. In terms of tissue distribution, expressed in the intestine.

It localises to the nucleus. Transcription factor which regulates the transcription of multiple genes expressed in the intestinal epithelium. Binds to the promoter of the intestinal sucrase-isomaltase SI and activates SI transcription. Binds to the DNA sequence 5'-ATAAAAACTTAT-3' in the promoter region of VDR and activates VDR transcription. Binds to and activates transcription of LPH. Activates transcription of CLDN2 and intestinal mucin MUC2. Binds to the 5'-AATTTTTTACAACACCT-3' DNA sequence in the promoter region of CA1 and activates CA1 transcription. Important in broad range of functions from early differentiation to maintenance of the intestinal epithelial lining of both the small and large intestine. Binds preferentially to methylated DNA. The chain is Homeobox protein CDX-2 (CDX2) from Mesocricetus auratus (Golden hamster).